A 229-amino-acid polypeptide reads, in one-letter code: Adenylate kinase 1 (229 aa).

42–47 (GCGKGT) provides a ligand contact to ATP. S62 bears the Phosphoserine mark. Residues S63, R68, 118–121 (GYPR), and Q125 contribute to the AMP site. Position 156 (R156) interacts with ATP. The AMP site is built by R164 and R175.

This sequence belongs to the adenylate kinase family. AK1 subfamily. In terms of tissue distribution, high expression levels in the thorax, suggesting a possible function in the gastrointestinal or reproductive systems.

The protein resides in the cytoplasm. The enzyme catalyses AMP + ATP = 2 ADP. Its function is as follows. Catalyzes the reversible transfer of the terminal phosphate group between ATP and AMP. Plays an important role in cellular energy homeostasis and in adenine nucleotide metabolism. This chain is Adenylate kinase 1, found in Drosophila melanogaster (Fruit fly).